The primary structure comprises 419 residues: UDP-arabinose 4-epimerase 1 (419 aa).

The interval 1 to 21 is disordered; the sequence is MFSFGRARSQGRQNRSMSLGG. Residues 1–32 lie on the Cytoplasmic side of the membrane; sequence MFSFGRARSQGRQNRSMSLGGLDYADPKKKNN. The chain crosses the membrane as a helical; Signal-anchor for type II membrane protein span at residues 33-51; the sequence is YLGKILLTASLTALCIFML. Residues 52 to 419 are Lumenal-facing; it reads KQSPTFNTPS…GLTTSSVSVY (368 aa). 72 to 103 is a binding site for NAD(+); sequence HVLVTGGAGYIGSHAALRLLKESYRVTIVDNL. Catalysis depends on Tyr-220, which acts as the Proton acceptor.

It belongs to the NAD(P)-dependent epimerase/dehydratase family. NAD(+) serves as cofactor. As to expression, high expression in roots. Also found in leaves, stems, flowers, and siliques.

It localises to the golgi apparatus. The protein localises to the golgi stack membrane. It carries out the reaction UDP-beta-L-arabinopyranose = UDP-alpha-D-xylose. Its pathway is nucleotide-sugar biosynthesis; UDP-L-arabinose biosynthesis; UDP-L-arabinose from UDP-alpha-D-xylose: step 1/1. The protein operates within cell wall biogenesis; cell wall polysaccharide biosynthesis. Its function is as follows. Acts as a UDP-D-xylose 4-epimerase but lacks both UDP-D-glucose and UDP-D-glucuronic acid 4-epimerase activities in vitro. The protein is UDP-arabinose 4-epimerase 1 of Arabidopsis thaliana (Mouse-ear cress).